A 78-amino-acid polypeptide reads, in one-letter code: Large ribosomal subunit protein bL28 (78 aa).

The segment at 1–23 (MSRVCQVTGKRPMVGNNRSHAKN) is disordered.

It belongs to the bacterial ribosomal protein bL28 family.

In Shewanella pealeana (strain ATCC 700345 / ANG-SQ1), this protein is Large ribosomal subunit protein bL28.